The following is a 612-amino-acid chain: Dihydroxy-acid dehydratase (612 aa).

Position 81 (D81) interacts with Mg(2+). A [2Fe-2S] cluster-binding site is contributed by C122. Residues D123 and K124 each coordinate Mg(2+). The residue at position 124 (K124) is an N6-carboxylysine. A [2Fe-2S] cluster-binding site is contributed by C195. E491 contributes to the Mg(2+) binding site. Residue S517 is the Proton acceptor of the active site.

It belongs to the IlvD/Edd family. In terms of assembly, homodimer. [2Fe-2S] cluster serves as cofactor. It depends on Mg(2+) as a cofactor.

It carries out the reaction (2R)-2,3-dihydroxy-3-methylbutanoate = 3-methyl-2-oxobutanoate + H2O. The catalysed reaction is (2R,3R)-2,3-dihydroxy-3-methylpentanoate = (S)-3-methyl-2-oxopentanoate + H2O. It participates in amino-acid biosynthesis; L-isoleucine biosynthesis; L-isoleucine from 2-oxobutanoate: step 3/4. It functions in the pathway amino-acid biosynthesis; L-valine biosynthesis; L-valine from pyruvate: step 3/4. Its function is as follows. Functions in the biosynthesis of branched-chain amino acids. Catalyzes the dehydration of (2R,3R)-2,3-dihydroxy-3-methylpentanoate (2,3-dihydroxy-3-methylvalerate) into 2-oxo-3-methylpentanoate (2-oxo-3-methylvalerate) and of (2R)-2,3-dihydroxy-3-methylbutanoate (2,3-dihydroxyisovalerate) into 2-oxo-3-methylbutanoate (2-oxoisovalerate), the penultimate precursor to L-isoleucine and L-valine, respectively. The protein is Dihydroxy-acid dehydratase of Haemophilus influenzae (strain PittGG).